A 484-amino-acid polypeptide reads, in one-letter code: UDP-N-acetylmuramoyl-L-alanyl-D-glutamate--L-lysine ligase (484 aa).

A UDP-N-acetyl-alpha-D-muramoyl-L-alanyl-D-glutamate-binding site is contributed by S43. 119-125 (GTKGKTT) contributes to the ATP binding site. Residues 161 to 162 (TT), S188, and R196 each bind UDP-N-acetyl-alpha-D-muramoyl-L-alanyl-D-glutamate. An N6-carboxylysine modification is found at K230. Residues 405–408 (DDPN) carry the L-lysine recognition motif motif.

This sequence belongs to the MurCDEF family. MurE subfamily. In terms of processing, carboxylation is probably crucial for Mg(2+) binding and, consequently, for the gamma-phosphate positioning of ATP.

It localises to the cytoplasm. The catalysed reaction is UDP-N-acetyl-alpha-D-muramoyl-L-alanyl-D-glutamate + L-lysine + ATP = UDP-N-acetyl-alpha-D-muramoyl-L-alanyl-gamma-D-glutamyl-L-lysine + ADP + phosphate + H(+). It functions in the pathway cell wall biogenesis; peptidoglycan biosynthesis. In terms of biological role, catalyzes the addition of L-lysine to the nucleotide precursor UDP-N-acetylmuramoyl-L-alanyl-D-glutamate (UMAG) in the biosynthesis of bacterial cell-wall peptidoglycan. The protein is UDP-N-acetylmuramoyl-L-alanyl-D-glutamate--L-lysine ligase of Streptococcus agalactiae serotype III (strain NEM316).